Consider the following 234-residue polypeptide: Putative N-acetylmannosamine-6-phosphate 2-epimerase (234 aa).

The protein belongs to the NanE family.

It carries out the reaction an N-acyl-D-glucosamine 6-phosphate = an N-acyl-D-mannosamine 6-phosphate. It functions in the pathway amino-sugar metabolism; N-acetylneuraminate degradation; D-fructose 6-phosphate from N-acetylneuraminate: step 3/5. In terms of biological role, converts N-acetylmannosamine-6-phosphate (ManNAc-6-P) to N-acetylglucosamine-6-phosphate (GlcNAc-6-P). The sequence is that of Putative N-acetylmannosamine-6-phosphate 2-epimerase from Klebsiella pneumoniae subsp. pneumoniae (strain ATCC 700721 / MGH 78578).